The following is a 170-amino-acid chain: NADH-ubiquinone oxidoreductase chain 2 (170 aa).

The next 4 membrane-spanning stretches (helical) occupy residues 24–44, 67–87, 101–121, and 150–170; these read LLWMTYFLLYSLLSISIIMMF, FLIFLNLLSLGGLPPFLGFLP, LFILTISVCLTLITLYFYLRL, and LILNFISIGGLLMILMFYMIL.

This sequence belongs to the complex I subunit 2 family.

The protein localises to the mitochondrion inner membrane. The catalysed reaction is a ubiquinone + NADH + 5 H(+)(in) = a ubiquinol + NAD(+) + 4 H(+)(out). Its function is as follows. Core subunit of the mitochondrial membrane respiratory chain NADH dehydrogenase (Complex I) that is believed to belong to the minimal assembly required for catalysis. Complex I functions in the transfer of electrons from NADH to the respiratory chain. The immediate electron acceptor for the enzyme is believed to be ubiquinone. This Anopheles albimanus (New world malaria mosquito) protein is NADH-ubiquinone oxidoreductase chain 2 (ND2).